The following is a 395-amino-acid chain: Fractalkine (395 aa).

The signal sequence occupies residues 1-24; that stretch reads MAPSPLAWLLRLAAFFHLCTLLPG. The tract at residues 25–100 is chemokine and involved in interaction with ITGAV:ITGB3 and ITGA4:ITGB1; it reads QHLGMTKCEI…HQAAALTKNG (76 aa). Over 25-336 the chain is Extracellular; that stretch reads QHLGMTKCEI…TPVPDTQAAT (312 aa). Cystine bridges form between Cys32-Cys58 and Cys36-Cys74. The segment at 101–336 is mucin-like stalk; that stretch reads GKFEKRVDNV…TPVPDTQAAT (236 aa). Composition is skewed to polar residues over residues 148 to 172 and 201 to 210; these read ARGT…TSEA and AVYQSGSSSW. Disordered stretches follow at residues 148–180 and 201–305; these read ARGT…LTAK and AVYQ…SGSQ. Over residues 218–236 the composition is skewed to low complexity; it reads SPSTTAPSPQVSTTSPSTP. A helical membrane pass occupies residues 337 to 357; that stretch reads RRQAVGLLAFLGLLFCLGVAM. Residues 358 to 395 lie on the Cytoplasmic side of the membrane; the sequence is FAYQSLQGCPRKMAGEMVEGLRYVPRSCGSNSYVLVPV.

It belongs to the intercrine delta family. In terms of assembly, monomer. Forms a ternary complex with CX3CR1 and ITGAV:ITGB3 or ITGA4:ITGB1. A soluble short 80 kDa form may be released by proteolytic cleavage from the long membrane-anchored form. In terms of tissue distribution, highest levels in brain. Lower levels in kidney, heart and lung. Also found in skeletal muscle and testis. Highly expressed in lesional smooth muscle cells, but not macrophages. Low levels of ABCD-3 mRNA were also found in anti-CD40-stimulated splenic B-cells, but not in resting B-cells. Also expressed in dendritic cells.

It localises to the cell membrane. The protein resides in the secreted. Functionally, chemokine that acts as a ligand for both CX3CR1 and integrins ITGAV:ITGB3 and ITGA4:ITGB1. The CX3CR1-CX3CL1 signaling exerts distinct functions in different tissue compartments, such as immune response, inflammation, cell adhesion and chemotaxis. Regulates leukocyte adhesion and migration processes at the endothelium. Can activate integrins in both a CX3CR1-dependent and CX3CR1-independent manner. In the presence of CX3CR1, activates integrins by binding to the classical ligand-binding site (site 1) in integrins. In the absence of CX3CR1, binds to a second site (site 2) in integrins which is distinct from site 1 and enhances the binding of other integrin ligands to site 1. Its function is as follows. The soluble form is chemotactic for T-cells and monocytes, but not for neutrophils. The membrane-bound form promotes adhesion of those leukocytes to endothelial cells. The chain is Fractalkine from Mus musculus (Mouse).